Reading from the N-terminus, the 326-residue chain is Pyruvate dehydrogenase E1 component subunit alpha (326 aa).

Heterodimer of an alpha and a beta chain. The cofactor is thiamine diphosphate.

It carries out the reaction N(6)-[(R)-lipoyl]-L-lysyl-[protein] + pyruvate + H(+) = N(6)-[(R)-S(8)-acetyldihydrolipoyl]-L-lysyl-[protein] + CO2. In terms of biological role, the pyruvate dehydrogenase complex catalyzes the overall conversion of pyruvate to acetyl-CoA and CO(2). It contains multiple copies of three enzymatic components: pyruvate dehydrogenase (E1), dihydrolipoamide acetyltransferase (E2) and lipoamide dehydrogenase (E3). This chain is Pyruvate dehydrogenase E1 component subunit alpha (pdhA), found in Rickettsia conorii (strain ATCC VR-613 / Malish 7).